The chain runs to 542 residues: GMP synthase [glutamine-hydrolyzing] (542 aa).

One can recognise a Glutamine amidotransferase type-1 domain in the interval 28-218 (IIVILDFGSQ…VYHICHCEPT (191 aa)). Catalysis depends on C105, which acts as the Nucleophile. Active-site residues include H192 and E194. Positions 219-417 (WTTAAFIEES…IGLPEEIVRR (199 aa)) constitute a GMPS ATP-PPase domain. Residue 246-252 (SGGVDSS) coordinates ATP.

Homodimer.

The catalysed reaction is XMP + L-glutamine + ATP + H2O = GMP + L-glutamate + AMP + diphosphate + 2 H(+). The protein operates within purine metabolism; GMP biosynthesis; GMP from XMP (L-Gln route): step 1/1. Catalyzes the synthesis of GMP from XMP. The chain is GMP synthase [glutamine-hydrolyzing] (guaA) from Synechocystis sp. (strain ATCC 27184 / PCC 6803 / Kazusa).